The following is a 411-amino-acid chain: Secretion apparatus protein BsaZ (411 aa).

4 helical membrane-spanning segments follow: residues 28–48 (IVAL…VDLT), 80–100 (IAAP…LVQS), 137–157 (ALLY…LYHA), and 175–195 (IVLT…VLIL). Positions 341–411 (AANRGGPPPE…APARTGDQNA (71 aa)) are disordered. The segment covering 370–404 (DACADNAFPDDAPPGAAAPNAGSPDSPAPDGGAPA) has biased composition (low complexity).

It belongs to the type III secretion exporter family.

It is found in the cell membrane. Its function is as follows. Part of the bsa type III secretion system, is involved in the intracellular replication of invading bacteria inside the host cell. Probably necessary for the lysis of the vacuole membrane and escape into the host cell cytoplasm. The protein is Secretion apparatus protein BsaZ (bsaZ) of Burkholderia pseudomallei (strain 1106a).